The sequence spans 473 residues: GTPase Der (473 aa).

2 consecutive EngA-type G domains span residues 5 to 170 and 178 to 351; these read PVVA…PEDV and LKLA…ASSM. GTP is bound by residues 11–18, 58–62, 123–126, 184–191, 231–235, and 296–299; these read GRPNVGKS, DTGGI, NKID, DTAGV, and NKWD. One can recognise a KH-like domain in the interval 352 to 436; that stretch reads FKVSTNRLTQ…PLKVEFKLNT (85 aa). A disordered region spans residues 438–473; the sequence is PYAGKKTTSSKKLRPGVSEARQKRRNMKYKKGSHKK. Residues 459–473 are compositionally biased toward basic residues; sequence QKRRNMKYKKGSHKK.

The protein belongs to the TRAFAC class TrmE-Era-EngA-EngB-Septin-like GTPase superfamily. EngA (Der) GTPase family. In terms of assembly, associates with the 50S ribosomal subunit.

Its function is as follows. GTPase that plays an essential role in the late steps of ribosome biogenesis. This is GTPase Der from Psychrobacter sp. (strain PRwf-1).